The primary structure comprises 234 residues: Phosphoglycolate phosphatase (234 aa).

Aspartate 8 functions as the Nucleophile in the catalytic mechanism. 2 residues coordinate Mg(2+): aspartate 8 and aspartate 10. Lysine 155 contributes to the substrate binding site. Positions 178 and 182 each coordinate Mg(2+).

This sequence belongs to the archaeal SPP-like hydrolase family. Requires Mg(2+) as cofactor.

It carries out the reaction 2-phosphoglycolate + H2O = glycolate + phosphate. In terms of biological role, catalyzes the dephosphorylation of 2-phosphoglycolate. This is Phosphoglycolate phosphatase from Thermococcus sibiricus (strain DSM 12597 / MM 739).